A 597-amino-acid chain; its full sequence is Miltiradiene synthase KSL2, chloroplastic (597 aa).

The transit peptide at M1 to M51 directs the protein to the chloroplast. Mg(2+) contacts are provided by D329, D333, N473, and E481. Positions D329–D333 match the DDXXD motif motif.

Belongs to the terpene synthase family. The cofactor is Mg(2+).

It is found in the plastid. It localises to the chloroplast. The catalysed reaction is (+)-copalyl diphosphate = miltiradiene + diphosphate. It functions in the pathway secondary metabolite biosynthesis; terpenoid biosynthesis. Involved in the biosynthesis of ent-kaurene diterpenoids natural products such as oridonin, miltiradiene, eriocalyxin B and nezukol, known to exhibit antitumor, anti-inflammatory and antibacterial activities. Catalyzes the conversion of (+)-copalyl diphosphate ((+)-CPP) to miltiradiene. In Isodon japonicus (Scutellaria japonica), this protein is Miltiradiene synthase KSL2, chloroplastic.